The chain runs to 508 residues: Photosystem II CP47 reaction center protein (508 aa).

6 helical membrane-spanning segments follow: residues 21–36, 101–115, 140–156, 203–218, 237–252, and 457–472; these read SVHI…WAGS, IVFS…IWHW, GIHL…FGAF, IAAG…FHLS, VLSS…AFVV, and SFAL…HGAR.

Belongs to the PsbB/PsbC family. PsbB subfamily. In terms of assembly, PSII is composed of 1 copy each of membrane proteins PsbA, PsbB, PsbC, PsbD, PsbE, PsbF, PsbH, PsbI, PsbJ, PsbK, PsbL, PsbM, PsbT, PsbX, PsbY, PsbZ, Psb30/Ycf12, at least 3 peripheral proteins of the oxygen-evolving complex and a large number of cofactors. It forms dimeric complexes. Binds multiple chlorophylls. PSII binds additional chlorophylls, carotenoids and specific lipids. serves as cofactor.

Its subcellular location is the plastid. It localises to the chloroplast thylakoid membrane. Its function is as follows. One of the components of the core complex of photosystem II (PSII). It binds chlorophyll and helps catalyze the primary light-induced photochemical processes of PSII. PSII is a light-driven water:plastoquinone oxidoreductase, using light energy to abstract electrons from H(2)O, generating O(2) and a proton gradient subsequently used for ATP formation. The sequence is that of Photosystem II CP47 reaction center protein from Aethionema grandiflorum (Persian stone-cress).